The chain runs to 62 residues: Temporin-CDYb (62 aa).

The first 22 residues, 1-22, serve as a signal peptide directing secretion; it reads MFTLKKSLLLLFFLGTINLSLC. The propeptide occupies 23-45; the sequence is EEERDADEEERRDDPEERAVQVE. At Leu-60 the chain carries Leucine amide.

Belongs to the frog skin active peptide (FSAP) family. Temporin subfamily. In terms of tissue distribution, expressed by the skin glands.

Its subcellular location is the secreted. Antimicrobial peptide. Has low activity against the Gram-positive bacterium S.aureus (MIC&gt;100 uM) and the Gram-negative bacterium E.coli (MIC&gt;100 uM). Has weak hemolytic activity against human erythrocytes. This is Temporin-CDYb from Rana dybowskii (Dybovsky's frog).